The following is a 152-amino-acid chain: Ubiquitin-conjugating enzyme E2 N (152 aa).

The UBC core domain maps to 3-149 (GLPRRIIKET…ARAWTRLYAM (147 aa)). K82 bears the N6-acetyllysine mark. The active-site Glycyl thioester intermediate is the C87. A Glycyl lysine isopeptide (Lys-Gly) (interchain with G-Cter in ISG15) cross-link involves residue K92. S131 carries the post-translational modification Phosphoserine.

This sequence belongs to the ubiquitin-conjugating enzyme family. As to quaternary structure, heterodimer with UBE2V2. Interacts (UBE2V2-UBE2N heterodimer) with the E3 ligase STUB1 (via the U-box domain); the complex has a specific 'Lys-63'-linked polyubiquitination activity. Interacts with RNF8 and RNF168. Interacts with RNF11. Interacts with the E3 ligases, HLTF and SHPRH; the interactions promote the 'Lys-63'-linked polyubiquitination of PCNA upon genotoxic stress and lead to DNA repair. Interacts with ARIH2 (via RING-type 2). Interacts with OTUB1; leading to inhibit E2-conjugating activity. Interacts with GPS2; leading to inhibit E2-conjugating activity. Interacts with RIGI and RNF135; involved in RIGI ubiquitination and activation. In terms of processing, conjugation to ISG15 impairs formation of the thioester bond with ubiquitin but not interaction with UBE2V2.

The enzyme catalyses S-ubiquitinyl-[E1 ubiquitin-activating enzyme]-L-cysteine + [E2 ubiquitin-conjugating enzyme]-L-cysteine = [E1 ubiquitin-activating enzyme]-L-cysteine + S-ubiquitinyl-[E2 ubiquitin-conjugating enzyme]-L-cysteine.. The protein operates within protein modification; protein ubiquitination. With respect to regulation, activity is inhibited by binding to OTUB1, which prevents 'Lys-63'-linked polyubiquitination. Activity is inhibited by GPS2, leading to prevent 'Lys-63'-linked polyubiquitination. In terms of biological role, the UBE2V1-UBE2N and UBE2V2-UBE2N heterodimers catalyze the synthesis of non-canonical 'Lys-63'-linked polyubiquitin chains. This type of polyubiquitination does not lead to protein degradation by the proteasome. Mediates transcriptional activation of target genes. Plays a role in the control of progress through the cell cycle and differentiation. Plays a role in the error-free DNA repair pathway and contributes to the survival of cells after DNA damage. Acts together with the E3 ligases, HLTF and SHPRH, in the 'Lys-63'-linked poly-ubiquitination of PCNA upon genotoxic stress, which is required for DNA repair. Appears to act together with E3 ligase RNF5 in the 'Lys-63'-linked polyubiquitination of JKAMP thereby regulating JKAMP function by decreasing its association with components of the proteasome and ERAD. Promotes TRIM5 capsid-specific restriction activity and the UBE2V1-UBE2N heterodimer acts in concert with TRIM5 to generate 'Lys-63'-linked polyubiquitin chains which activate the MAP3K7/TAK1 complex which in turn results in the induction and expression of NF-kappa-B and MAPK-responsive inflammatory genes. Together with RNF135 and UB2V1, catalyzes the viral RNA-dependent 'Lys-63'-linked polyubiquitination of RIGI to activate the downstream signaling pathway that leads to interferon beta production. UBE2V1-UBE2N together with TRAF3IP2 E3 ubiquitin ligase mediate 'Lys-63'-linked polyubiquitination of TRAF6, a component of IL17A-mediated signaling pathway. The protein is Ubiquitin-conjugating enzyme E2 N (Ube2n) of Rattus norvegicus (Rat).